The sequence spans 316 residues: Ribosomal protein L11 methyltransferase (316 aa).

Positions 157, 178, 200, and 243 each coordinate S-adenosyl-L-methionine.

Belongs to the methyltransferase superfamily. PrmA family.

The protein resides in the cytoplasm. It catalyses the reaction L-lysyl-[protein] + 3 S-adenosyl-L-methionine = N(6),N(6),N(6)-trimethyl-L-lysyl-[protein] + 3 S-adenosyl-L-homocysteine + 3 H(+). Methylates ribosomal protein L11. This chain is Ribosomal protein L11 methyltransferase, found in Streptococcus pneumoniae (strain 70585).